The chain runs to 288 residues: Formamidopyrimidine-DNA glycosylase (288 aa).

The active-site Schiff-base intermediate with DNA is the P2. Residue E3 is the Proton donor of the active site. Catalysis depends on K58, which acts as the Proton donor; for beta-elimination activity. Residues H101, R124, and R169 each contribute to the DNA site. The FPG-type zinc-finger motif lies at 254-288 (LVYDRAGLPCRVCGTPIRQIVQGQRSTFYCPACQR). The active-site Proton donor; for delta-elimination activity is R278.

This sequence belongs to the FPG family. Monomer. Zn(2+) is required as a cofactor.

The enzyme catalyses Hydrolysis of DNA containing ring-opened 7-methylguanine residues, releasing 2,6-diamino-4-hydroxy-5-(N-methyl)formamidopyrimidine.. The catalysed reaction is 2'-deoxyribonucleotide-(2'-deoxyribose 5'-phosphate)-2'-deoxyribonucleotide-DNA = a 3'-end 2'-deoxyribonucleotide-(2,3-dehydro-2,3-deoxyribose 5'-phosphate)-DNA + a 5'-end 5'-phospho-2'-deoxyribonucleoside-DNA + H(+). Its function is as follows. Involved in base excision repair of DNA damaged by oxidation or by mutagenic agents. Acts as a DNA glycosylase that recognizes and removes damaged bases. Has a preference for oxidized purines, such as 7,8-dihydro-8-oxoguanine (8-oxoG). Has AP (apurinic/apyrimidinic) lyase activity and introduces nicks in the DNA strand. Cleaves the DNA backbone by beta-delta elimination to generate a single-strand break at the site of the removed base with both 3'- and 5'-phosphates. In Ralstonia nicotianae (strain ATCC BAA-1114 / GMI1000) (Ralstonia solanacearum), this protein is Formamidopyrimidine-DNA glycosylase.